Consider the following 316-residue polypeptide: HPr kinase/phosphorylase (316 aa).

Residues His143 and Lys164 contribute to the active site. 158–165 is an ATP binding site; sequence GEAGSGKS. Ser165 lines the Mg(2+) pocket. Asp182 functions as the Proton acceptor; for phosphorylation activity. Proton donor; for dephosphorylation activity in the catalytic mechanism. An important for the catalytic mechanism of both phosphorylation and dephosphorylation region spans residues 206 to 215; the sequence is LEVRGLGVLN. Glu207 provides a ligand contact to Mg(2+). Arg251 is a catalytic residue. An important for the catalytic mechanism of dephosphorylation region spans residues 272-277; that stretch reads PVMPGR.

Belongs to the HPrK/P family. In terms of assembly, homohexamer. It depends on Mg(2+) as a cofactor.

The enzyme catalyses [HPr protein]-L-serine + ATP = [HPr protein]-O-phospho-L-serine + ADP + H(+). It carries out the reaction [HPr protein]-O-phospho-L-serine + phosphate + H(+) = [HPr protein]-L-serine + diphosphate. Its function is as follows. Catalyzes the ATP- as well as the pyrophosphate-dependent phosphorylation of a specific serine residue in HPr, a phosphocarrier protein of the phosphoenolpyruvate-dependent sugar phosphotransferase system (PTS). HprK/P also catalyzes the pyrophosphate-producing, inorganic phosphate-dependent dephosphorylation (phosphorolysis) of seryl-phosphorylated HPr (P-Ser-HPr). The chain is HPr kinase/phosphorylase from Xanthomonas oryzae pv. oryzae (strain MAFF 311018).